The primary structure comprises 160 residues: Cytochrome b6-f complex subunit 4 (160 aa).

The next 3 membrane-spanning stretches (helical) occupy residues 36–56 (LLYI…GLAV), 95–115 (LLGI…PFIE), and 131–151 (SLFL…CLPI).

Belongs to the cytochrome b family. PetD subfamily. In terms of assembly, the 4 large subunits of the cytochrome b6-f complex are cytochrome b6, subunit IV (17 kDa polypeptide, PetD), cytochrome f and the Rieske protein, while the 4 small subunits are PetG, PetL, PetM and PetN. The complex functions as a dimer.

It is found in the cellular thylakoid membrane. Its function is as follows. Component of the cytochrome b6-f complex, which mediates electron transfer between photosystem II (PSII) and photosystem I (PSI), cyclic electron flow around PSI, and state transitions. The chain is Cytochrome b6-f complex subunit 4 from Prochlorococcus marinus (strain NATL2A).